The primary structure comprises 527 residues: Probable malate:quinone oxidoreductase (527 aa).

The protein belongs to the MQO family. FAD serves as cofactor.

It catalyses the reaction (S)-malate + a quinone = a quinol + oxaloacetate. The protein operates within carbohydrate metabolism; tricarboxylic acid cycle; oxaloacetate from (S)-malate (quinone route): step 1/1. This Pectobacterium carotovorum subsp. carotovorum (strain PC1) protein is Probable malate:quinone oxidoreductase.